The chain runs to 317 residues: UV DNA damage endonuclease (317 aa).

The protein belongs to the uve1/UvsE family.

Component in a DNA repair pathway. Removal of UV LIGHT damaged nucleotides. Recognizes pyrimidine dimers and cleave a phosphodiester bond immediately 5' to the lesion. The polypeptide is UV DNA damage endonuclease (Bacillus mycoides (strain KBAB4) (Bacillus weihenstephanensis)).